We begin with the raw amino-acid sequence, 93 residues long: Auxin-responsive protein SAUR26 (93 aa).

Belongs to the ARG7 family. As to quaternary structure, interacts with PP2C-D1. In terms of tissue distribution, higher expression in thermo-responsive cultivars (e.g. cv. Alst-1, cv. Ang-0 and cv. Com-0) than in low thermo-responsive cultivars (e.g. cv. Dja-1, cv. El-0 and cv. Kon).

The protein resides in the cell membrane. Provide a mechanistic link between auxin and plasma membrane H(+)-ATPases (PM H(+)-ATPases, e.g. AHA1 and AHA2), and triggers PM H(+)-ATPases activity by promoting phosphorylation of their C-terminal autoinhibitory domain as a result of PP2C-D subfamily of type 2C phosphatases inhibition, thus leading to the acidification of the apoplast and the facilitation of solutes and water uptake to drive cell expansion. Functions as a positive effectors of cell expansion through modulation of auxin transport. Involved in thermo-responsiveness of plant architecture. Enhances plasma membrane H(+)-ATPase. Probably involved in light intensity mediated root development. This is Auxin-responsive protein SAUR26 from Arabidopsis thaliana (Mouse-ear cress).